The primary structure comprises 220 residues: MTSHQTGKIEVHWNDPSSGIFLSQTQRTSSTSSLKKSASSRRLVYGDDMLAPKPLAGQVLSKSPLPPFSPSKIMNRSISVPPTNISVPQISSNPLNLMKKSSDNDIFTTFNDTTNDCMNEASCEDVRHSLLQIIESKSNLSDSVHKMLGERVKTNLLLQGQLENMEGFWLQKLSQTCRLALTGNISEAKAFIVEIMCAGVVTNCVRWCPVLKTLIENLAI.

This is an uncharacterized protein from Schizosaccharomyces pombe (strain 972 / ATCC 24843) (Fission yeast).